Consider the following 532-residue polypeptide: Probable C4-dicarboxylate sensor kinase (532 aa).

The Cytoplasmic segment spans residues methionine 1 to lysine 12. The helical transmembrane segment at isoleucine 13 to leucine 33 threads the bilayer. Residues glycine 34–glutamine 175 are Extracellular-facing. Residues proline 176 to alanine 196 traverse the membrane as a helical segment. The Cytoplasmic portion of the chain corresponds to serine 197–glycine 532. The region spanning valine 216–leucine 279 is the PAS domain. The 217-residue stretch at serine 315–arginine 531 folds into the Histidine kinase domain. Histidine 339 is modified (phosphohistidine; by autocatalysis).

The protein localises to the cell membrane. The catalysed reaction is ATP + protein L-histidine = ADP + protein N-phospho-L-histidine.. Functionally, member of the two-component regulatory system DctS/DctR. Probably activates DctR by phosphorylation. Essential for expression of dctP. The polypeptide is Probable C4-dicarboxylate sensor kinase (dctS) (Halalkalibacterium halodurans (strain ATCC BAA-125 / DSM 18197 / FERM 7344 / JCM 9153 / C-125) (Bacillus halodurans)).